We begin with the raw amino-acid sequence, 168 residues long: Probable deoxyuridine 5'-triphosphate nucleotidohydrolase (168 aa).

Belongs to the dCTP deaminase family. Archaeal dUTPase subfamily.

It catalyses the reaction dUTP + H2O = dUMP + diphosphate + H(+). It participates in pyrimidine metabolism; dUMP biosynthesis; dUMP from dCTP (dUTP route): step 2/2. Functionally, this enzyme is involved in nucleotide metabolism: it produces dUMP, the immediate precursor of thymidine nucleotides and it decreases the intracellular concentration of dUTP so that uracil cannot be incorporated into DNA. In Archaeoglobus fulgidus (strain ATCC 49558 / DSM 4304 / JCM 9628 / NBRC 100126 / VC-16), this protein is Probable deoxyuridine 5'-triphosphate nucleotidohydrolase.